The primary structure comprises 278 residues: MSVPTVLQKILARKAEEVAERRARVNLAEVERLARSADAPRGFANALLERAKRKEPAVIAEIKKASPSKGVLREHFVPAEIARSYEAGGAACLSVLTDVDFFQGADAYLKEARAACALPVIRKDFMIDPYQIVEARAIGADCILLIVSALDDVLMAELAATAKSVGLDVLVEVHDGTELERALKTLDTPLVGINNRNLHTFEVSLETTLDLLPEIPRDRLVVTESGILNRADVELMEVSEVYAFLVGEAFMRADDPGLELKRLFFQERGAVVLGADPD.

Belongs to the TrpC family.

It carries out the reaction 1-(2-carboxyphenylamino)-1-deoxy-D-ribulose 5-phosphate + H(+) = (1S,2R)-1-C-(indol-3-yl)glycerol 3-phosphate + CO2 + H2O. The protein operates within amino-acid biosynthesis; L-tryptophan biosynthesis; L-tryptophan from chorismate: step 4/5. In Pseudomonas aeruginosa (strain ATCC 15692 / DSM 22644 / CIP 104116 / JCM 14847 / LMG 12228 / 1C / PRS 101 / PAO1), this protein is Indole-3-glycerol phosphate synthase (trpC).